A 180-amino-acid polypeptide reads, in one-letter code: ADP-ribosylation factor 5 (180 aa).

Glycine 2 is lipidated: N-myristoyl glycine. GTP is bound by residues 24 to 31 (GLDAAGKT), 67 to 71 (DVGGQ), and 126 to 129 (NKQD).

This sequence belongs to the small GTPase superfamily. Arf family.

It localises to the golgi apparatus. GTP-binding protein involved in protein trafficking; may modulate vesicle budding and uncoating within the Golgi apparatus. This Gallus gallus (Chicken) protein is ADP-ribosylation factor 5 (ARF5).